Here is a 546-residue protein sequence, read N- to C-terminus: 2-succinyl-5-enolpyruvyl-6-hydroxy-3-cyclohexene-1-carboxylate synthase (546 aa).

It belongs to the TPP enzyme family. MenD subfamily. Homodimer. It depends on Mg(2+) as a cofactor. Mn(2+) serves as cofactor. Thiamine diphosphate is required as a cofactor.

It catalyses the reaction isochorismate + 2-oxoglutarate + H(+) = 5-enolpyruvoyl-6-hydroxy-2-succinyl-cyclohex-3-ene-1-carboxylate + CO2. Its pathway is quinol/quinone metabolism; 1,4-dihydroxy-2-naphthoate biosynthesis; 1,4-dihydroxy-2-naphthoate from chorismate: step 2/7. It functions in the pathway quinol/quinone metabolism; menaquinone biosynthesis. In terms of biological role, catalyzes the thiamine diphosphate-dependent decarboxylation of 2-oxoglutarate and the subsequent addition of the resulting succinic semialdehyde-thiamine pyrophosphate anion to isochorismate to yield 2-succinyl-5-enolpyruvyl-6-hydroxy-3-cyclohexene-1-carboxylate (SEPHCHC). The chain is 2-succinyl-5-enolpyruvyl-6-hydroxy-3-cyclohexene-1-carboxylate synthase from Mycolicibacterium smegmatis (strain ATCC 700084 / mc(2)155) (Mycobacterium smegmatis).